The following is a 1233-amino-acid chain: DNA-directed RNA polymerase subunit beta' (1233 aa).

4 residues coordinate Zn(2+): Cys61, Cys63, Cys76, and Cys79. Positions 455, 457, and 459 each coordinate Mg(2+). Cys824, Cys898, Cys905, and Cys908 together coordinate Zn(2+). The span at 1211–1220 (ELQKAFDKEP) shows a compositional bias: basic and acidic residues. A disordered region spans residues 1211–1233 (ELQKAFDKEPASSTGNKASNSAK). Residues 1221 to 1233 (ASSTGNKASNSAK) are compositionally biased toward polar residues.

The protein belongs to the RNA polymerase beta' chain family. In terms of assembly, the RNAP catalytic core consists of 2 alpha, 1 beta, 1 beta' and 1 omega subunit. When a sigma factor is associated with the core the holoenzyme is formed, which can initiate transcription. The cofactor is Mg(2+). Zn(2+) serves as cofactor.

The enzyme catalyses RNA(n) + a ribonucleoside 5'-triphosphate = RNA(n+1) + diphosphate. Its function is as follows. DNA-dependent RNA polymerase catalyzes the transcription of DNA into RNA using the four ribonucleoside triphosphates as substrates. In Oenococcus oeni (strain ATCC BAA-331 / PSU-1), this protein is DNA-directed RNA polymerase subunit beta'.